The sequence spans 1309 residues: Nuclear pore complex protein NUP1 (1309 aa).

Disordered regions lie at residues methionine 1 to tryptophan 58, arginine 83 to aspartate 118, alanine 173 to asparagine 210, arginine 266 to arginine 296, serine 329 to lysine 348, glutamate 384 to proline 417, leucine 467 to proline 538, serine 594 to leucine 617, and serine 635 to asparagine 680. A 25 X 2 AA repeats of F-G region spans residues alanine 2–valine 677. Over residues lysine 22–glutamine 32 the composition is skewed to basic residues. Over residues glycine 47 to tryptophan 58 the composition is skewed to gly residues. The span at threonine 91 to glutamine 101 shows a compositional bias: polar residues. Over residues proline 195–proline 204 the composition is skewed to basic and acidic residues. The segment covering proline 268–serine 283 has biased composition (polar residues). Over residues lysine 396 to alanine 405 the composition is skewed to basic and acidic residues. Composition is skewed to polar residues over residues methionine 597 to leucine 617 and serine 635 to proline 659. The span at threonine 660 to lysine 673 shows a compositional bias: basic and acidic residues. The stretch at phenylalanine 711–glycine 712 is repeat 1. A disordered region spans residues lysine 719–serine 865. Composition is skewed to low complexity over residues serine 728–alanine 741 and serine 767–serine 783. Residues serine 789 to isoleucine 803 are compositionally biased toward polar residues. Residues phenylalanine 804 to glycine 805 form repeat 2. The segment covering threonine 809–serine 827 has biased composition (low complexity). 12 repeat units span residues phenylalanine 831–glycine 832, phenylalanine 861–glycine 862, phenylalanine 869–glycine 870, phenylalanine 883–glycine 884, phenylalanine 898–glycine 899, phenylalanine 927–glycine 928, phenylalanine 956–glycine 957, phenylalanine 983–glycine 984, phenylalanine 1004–glycine 1005, phenylalanine 1029–glycine 1030, phenylalanine 1038–glycine 1039, and phenylalanine 1053–glycine 1054. Residues phenylalanine 1004–glutamine 1023 show a composition bias toward low complexity. Residues phenylalanine 1004–glutamine 1028 are disordered. The span at threonine 1068 to serine 1086 shows a compositional bias: low complexity. Residues threonine 1068–valine 1105 are disordered. Repeat 15 spans residues phenylalanine 1089–glycine 1090. Residues proline 1096–valine 1105 show a composition bias toward low complexity. 10 consecutive repeat copies span residues phenylalanine 1121 to glycine 1122, phenylalanine 1137 to glycine 1138, phenylalanine 1151 to glycine 1152, phenylalanine 1153 to glycine 1154, phenylalanine 1166 to glycine 1167, phenylalanine 1177 to glycine 1178, phenylalanine 1186 to glycine 1187, phenylalanine 1224 to glycine 1225, phenylalanine 1238 to glycine 1239, and phenylalanine 1255 to glycine 1256. The disordered stretch occupies residues phenylalanine 1278–lysine 1309. Residues glutamine 1279 to aspartate 1293 are compositionally biased toward gly residues. Basic residues predominate over residues arginine 1297 to lysine 1309.

Part of the nuclear pore complex (NPC). The NPC has an eight-fold symmetrical structure comprising a central transport channel and two rings, the cytoplasmic and nuclear rings, to which eight filaments are attached. The cytoplasmic filaments have loose ends, while the nuclear filaments are joined in a distal ring, forming a nuclear basket. NPCs are highly dynamic in configuration and composition, and can be devided in 3 subcomplexes, the NUP62 subcomplex, the NUP107-160 subcomplex and the NUP93 subcomplex, containing approximately 30 different nucleoporin proteins. Interacts with EER5, anchoring the TREX-2 complex on the nuclear pore complex. Interacts with UCH1 and UCH2.

It is found in the nucleus envelope. It localises to the nucleus. Its subcellular location is the nuclear pore complex. The protein resides in the cytoplasm. The protein localises to the cytosol. Its function is as follows. Nucleoporin required for nuclear mRNA export. Functions as an adapter and/or regulator molecule in the periphery of the nuclear pore complex (NPC). May interact with importin proteins and mediate active nucleocytoplasmic transport through the NPC. Involved in regulation of nuclear morphology. In Arabidopsis thaliana (Mouse-ear cress), this protein is Nuclear pore complex protein NUP1.